We begin with the raw amino-acid sequence, 108 residues long: Vacuolar ATPase assembly integral membrane protein VMA21 (108 aa).

The Cytoplasmic portion of the chain corresponds to Met-1–Ser-34. A helical transmembrane segment spans residues Val-35–Phe-55. Residues Gly-56–Tyr-68 lie on the Lumenal side of the membrane. The chain crosses the membrane as a helical span at residues Ala-69–Ala-89. Residues Arg-90–Glu-108 lie on the Cytoplasmic side of the membrane.

This sequence belongs to the VMA21 family.

The protein resides in the endoplasmic reticulum membrane. The protein localises to the endoplasmic reticulum-Golgi intermediate compartment membrane. It is found in the cytoplasmic vesicle. It localises to the COPII-coated vesicle membrane. Its function is as follows. Required for the assembly of the V0 complex of the vacuolar ATPase (V-ATPase) in the endoplasmic reticulum. This Ajellomyces capsulatus (strain NAm1 / WU24) (Darling's disease fungus) protein is Vacuolar ATPase assembly integral membrane protein VMA21.